Reading from the N-terminus, the 400-residue chain is Probable peptidoglycan glycosyltransferase FtsW (400 aa).

Residues 1–24 lie on the Cytoplasmic side of the membrane; that stretch reads MSTGSLPLGLPSRDSLDGLRNSVD. A helical membrane pass occupies residues 25–45; sequence LPLLAAAALLLGLGLIMVASA. Topologically, residues 46-63 are periplasmic; it reads SMDLGERYYGNTWHFFQR. The chain crosses the membrane as a helical span at residues 64–84; that stretch reads QVLFAAIGLALATVMWAIPLE. Over 85–88 the chain is Cytoplasmic; that stretch reads RWER. A helical membrane pass occupies residues 89–109; sequence AGPWLLILVMVLLIAVLLPGV. The Periplasmic portion of the chain corresponds to 110–118; that stretch reads GRTVNGATR. The helical transmembrane segment at 119–139 threads the bilayer; it reads WIPIGMFNLQVAEPVKLLVVM. Residues 140 to 153 lie on the Cytoplasmic side of the membrane; the sequence is YLAGYIVRHYSALR. Residues 154 to 174 form a helical membrane-spanning segment; sequence LHLRGFVRPLVVLGFGTVLLL. The Periplasmic portion of the chain corresponds to 175 to 177; it reads LQP. Residues 178-198 traverse the membrane as a helical segment; the sequence is DFGGAAIMLAIGMGMLFLAGA. A topological domain (cytoplasmic) is located at residue K199. The helical transmembrane segment at 200 to 220 threads the bilayer; sequence LWQFAALGATIAVGMAFVAVA. Residues 221 to 278 are Periplasmic-facing; sequence APYRVARLTAFLDPWQDPFATGFQLTQSLIAIGSGGWFGTGLGNSVQKLFYLPEAHND. A helical membrane pass occupies residues 279–299; it reads FLFAVFAEEFGFIGVLALIAL. Residues 300–324 are Cytoplasmic-facing; it reads FAVVVWRCVKIGLWAERAGHAFGSH. The helical transmembrane segment at 325–345 threads the bilayer; it reads LAFGVAIWLALQSALNLAVNM. Topologically, residues 346-354 are periplasmic; sequence GLLPTKGMT. Residues 355–375 form a helical membrane-spanning segment; sequence LPFLSYGGSSLIVTLMAIGLV. At 376–400 the chain is on the cytoplasmic side; it reads MRVYREAQIPAPRQSTPPRRKRGQA.

The protein belongs to the SEDS family. FtsW subfamily.

Its subcellular location is the cell inner membrane. It carries out the reaction [GlcNAc-(1-&gt;4)-Mur2Ac(oyl-L-Ala-gamma-D-Glu-L-Lys-D-Ala-D-Ala)](n)-di-trans,octa-cis-undecaprenyl diphosphate + beta-D-GlcNAc-(1-&gt;4)-Mur2Ac(oyl-L-Ala-gamma-D-Glu-L-Lys-D-Ala-D-Ala)-di-trans,octa-cis-undecaprenyl diphosphate = [GlcNAc-(1-&gt;4)-Mur2Ac(oyl-L-Ala-gamma-D-Glu-L-Lys-D-Ala-D-Ala)](n+1)-di-trans,octa-cis-undecaprenyl diphosphate + di-trans,octa-cis-undecaprenyl diphosphate + H(+). The protein operates within cell wall biogenesis; peptidoglycan biosynthesis. Peptidoglycan polymerase that is essential for cell division. The chain is Probable peptidoglycan glycosyltransferase FtsW from Thioalkalivibrio sp. (strain K90mix).